Reading from the N-terminus, the 157-residue chain is UPF0756 membrane protein BH3161 (157 aa).

4 helical membrane-spanning segments follow: residues 1–21, 54–74, 87–107, and 117–137; these read MISQ…LAKN, LGVT…EIGF, WVAL…IDLL, and LVLG…GPLI.

Belongs to the UPF0756 family.

It localises to the cell membrane. The protein is UPF0756 membrane protein BH3161 of Halalkalibacterium halodurans (strain ATCC BAA-125 / DSM 18197 / FERM 7344 / JCM 9153 / C-125) (Bacillus halodurans).